Consider the following 185-residue polypeptide: Ribosome-recycling factor (185 aa).

The protein belongs to the RRF family.

It localises to the cytoplasm. Responsible for the release of ribosomes from messenger RNA at the termination of protein biosynthesis. May increase the efficiency of translation by recycling ribosomes from one round of translation to another. In Buchnera aphidicola subsp. Acyrthosiphon pisum (strain APS) (Acyrthosiphon pisum symbiotic bacterium), this protein is Ribosome-recycling factor.